A 63-amino-acid polypeptide reads, in one-letter code: Large ribosomal subunit protein uL29 (63 aa).

The protein belongs to the universal ribosomal protein uL29 family.

This Aeromonas salmonicida (strain A449) protein is Large ribosomal subunit protein uL29.